Consider the following 310-residue polypeptide: Cysteine synthase (310 aa).

Lys44 carries the post-translational modification N6-(pyridoxal phosphate)lysine. Pyridoxal 5'-phosphate is bound by residues Asn74, 179–183 (GTGGT), and Ser267.

Belongs to the cysteine synthase/cystathionine beta-synthase family. Requires pyridoxal 5'-phosphate as cofactor.

It catalyses the reaction O-acetyl-L-serine + hydrogen sulfide = L-cysteine + acetate. The protein operates within amino-acid biosynthesis; L-cysteine biosynthesis; L-cysteine from L-serine: step 2/2. The protein is Cysteine synthase (cysK) of Neisseria meningitidis serogroup B (strain ATCC BAA-335 / MC58).